Reading from the N-terminus, the 298-residue chain is N-acetylmuramic acid 6-phosphate etherase (298 aa).

One can recognise an SIS domain in the interval 55–218 (IHAQVSGGGR…STGLMIKSGK (164 aa)). Glu83 (proton donor) is an active-site residue. Glu114 is an active-site residue.

It belongs to the GCKR-like family. MurNAc-6-P etherase subfamily. In terms of assembly, homodimer.

The catalysed reaction is N-acetyl-D-muramate 6-phosphate + H2O = N-acetyl-D-glucosamine 6-phosphate + (R)-lactate. It participates in amino-sugar metabolism; 1,6-anhydro-N-acetylmuramate degradation. It functions in the pathway amino-sugar metabolism; N-acetylmuramate degradation. Its pathway is cell wall biogenesis; peptidoglycan recycling. In terms of biological role, specifically catalyzes the cleavage of the D-lactyl ether substituent of MurNAc 6-phosphate, producing GlcNAc 6-phosphate and D-lactate. Together with AnmK, is also required for the utilization of anhydro-N-acetylmuramic acid (anhMurNAc) either imported from the medium or derived from its own cell wall murein, and thus plays a role in cell wall recycling. This chain is N-acetylmuramic acid 6-phosphate etherase, found in Escherichia coli O17:K52:H18 (strain UMN026 / ExPEC).